Reading from the N-terminus, the 231-residue chain is Cytochrome c oxidase assembly factor 7 (231 aa).

Ala-2 carries the post-translational modification N-acetylalanine. Sel1-like repeat units lie at residues 34–66, 68–104, 108–146, 147–183, and 184–219; these read PDGCYRLVDYLEGIRKNFDEAAKVLKFNCEENQ, SDSCYKLGAYYVTGKGGLTQDLKAAARCFLMACEKPG, IAACHNVGLLAHDGQVNEDGQPDLGKARDYYTRACDGGY, TSSCFNLSAMFLQGAPGFPKDMDLACKYSMKACDLGH, and IWACANASRMYKLGDGVDKDEAKAEVLKNRAQQLHK.

Belongs to the hcp beta-lactamase family. Interacts with CHCHD4/MIA40 through transient intermolecular disulfide bonds.

It localises to the mitochondrion intermembrane space. Functionally, required for assembly of mitochondrial respiratory chain complex I and complex IV. The sequence is that of Cytochrome c oxidase assembly factor 7 (COA7) from Homo sapiens (Human).